A 201-amino-acid polypeptide reads, in one-letter code: Recombination protein RecR (201 aa).

Residues 57–72 form a C4-type zinc finger; that stretch reads CADCRTFTEQDICTIC. The Toprim domain occupies 81-176; it reads GQICVVESPA…VASRIAHGVP (96 aa).

It belongs to the RecR family.

Functionally, may play a role in DNA repair. It seems to be involved in an RecBC-independent recombinational process of DNA repair. It may act with RecF and RecO. The sequence is that of Recombination protein RecR from Serratia proteamaculans (strain 568).